A 435-amino-acid chain; its full sequence is Gamma-glutamyl phosphate reductase (435 aa).

It belongs to the gamma-glutamyl phosphate reductase family.

The protein resides in the cytoplasm. It catalyses the reaction L-glutamate 5-semialdehyde + phosphate + NADP(+) = L-glutamyl 5-phosphate + NADPH + H(+). The protein operates within amino-acid biosynthesis; L-proline biosynthesis; L-glutamate 5-semialdehyde from L-glutamate: step 2/2. In terms of biological role, catalyzes the NADPH-dependent reduction of L-glutamate 5-phosphate into L-glutamate 5-semialdehyde and phosphate. The product spontaneously undergoes cyclization to form 1-pyrroline-5-carboxylate. This is Gamma-glutamyl phosphate reductase from Bradyrhizobium diazoefficiens (strain JCM 10833 / BCRC 13528 / IAM 13628 / NBRC 14792 / USDA 110).